A 200-amino-acid chain; its full sequence is Late embryogenesis abundant protein 19 (200 aa).

2 disordered regions span residues 1–158 (MASH…KSTV) and 172–200 (TEDKAGTDDGANKDTSATAAATETTARDH). 5 stretches are compositionally biased toward basic and acidic residues: residues 13–23 (GETKAHTEEKA), 30–42 (SKDKASEAKDRAS), 53–81 (QDTKEATKEKAQAAKERASETAQAAKDKT), 88–97 (ARDKAAESKD), and 105–114 (EKTEQAKQKA). Residues 52–81 (GQDTKEATKEKAQAAKERASETAQAAKDKT) are a coiled coil. The span at 115–130 (AETAGAAKQKTAETAQ) shows a compositional bias: low complexity. Polar residues predominate over residues 145 to 156 (SVLQQASEQVKS). Residues 172–183 (TEDKAGTDDGAN) show a composition bias toward basic and acidic residues. A compositionally biased stretch (low complexity) spans 186 to 200 (TSATAAATETTARDH).

It belongs to the LEA type 4 family. As to expression, expressed in the shoot apex and leaves.

Its function is as follows. Involved in response to drought stress. This is Late embryogenesis abundant protein 19 from Oryza sativa subsp. indica (Rice).